The chain runs to 28 residues: ACGPGCSGSCRQKGDRIKCINGSCHCYP.

3 disulfide bridges follow: Cys2/Cys19, Cys6/Cys24, and Cys10/Cys26. The segment at Ile17–Cys24 is interaction with Ca(2+)-activated K(+) channels.

It belongs to the short scorpion toxin superfamily. Potassium channel inhibitor family. Alpha-KTx 13 subfamily. In terms of tissue distribution, expressed by the venom gland.

The protein resides in the secreted. Functionally, potent and selective inhibitor of Kv1.2/KCNA2 potassium channels. This is Potassium channel toxin alpha-KTx 13.2 from Orthochirus scrobiculosus (Central Asian scorpion).